A 159-amino-acid polypeptide reads, in one-letter code: Transcription elongation factor A protein-like 1 (159 aa).

The interval 1 to 97 is disordered; it reads MDKPRKENEE…PPCGVGKHKL (97 aa). A compositionally biased stretch (basic and acidic residues) spans 17–34; it reads KTDEERPPVEHSPEKQSP. Phosphoserine is present on residues Ser28, Ser33, Ser38, Ser39, Ser43, and Ser44. Positions 37 to 54 are enriched in acidic residues; the sequence is QSSEEQSSEEEFFPEELL. Positions 64–80 are enriched in basic and acidic residues; the sequence is SEERPPQEGLSRKDLFE.

This sequence belongs to the TFS-II family. TFA subfamily. Post-translationally, phosphorylation of Ser-38 and Ser-39 is critical for transcriptional repression. In terms of tissue distribution, expressed in all tissues examined. Highly expressed in heart, ovary, prostate and skeletal muscle. Moderately expressed in brain, placenta, testis and small intestine. Weakly expressed in lung, liver and spleen. Expressed in several cancer cell lines.

The protein resides in the nucleus. May be involved in transcriptional regulation. Modulates various viral and cellular promoters in a promoter context-dependent manner. For example, transcription from the FOS promoter is increased, while Rous sarcoma virus (RSV) long terminal repeat (LTR) promoter activity is repressed. Does not bind DNA directly. In Homo sapiens (Human), this protein is Transcription elongation factor A protein-like 1.